A 321-amino-acid chain; its full sequence is Beta-lactamase (321 aa).

A signal peptide spans 1–30 (MEKNRKKQIVVLSIALVCIFILVFSLFHKS). The active-site Acyl-ester intermediate is the serine 83. 233–235 (KTG) lines the substrate pocket.

This sequence belongs to the class-A beta-lactamase family.

It carries out the reaction a beta-lactam + H2O = a substituted beta-amino acid. With respect to regulation, inhibited by clavulanic acid. Can hydrolyze cephalosporins, penicillins and also cefoxitin; but at a slow rate. The polypeptide is Beta-lactamase (cfxA) (Phocaeicola vulgatus (Bacteroides vulgatus)).